The following is a 147-amino-acid chain: Cytochrome c-type biogenesis protein CcmE (147 aa).

Residues 1–9 lie on the Cytoplasmic side of the membrane; the sequence is MKSLKKQRR. Residues 10-30 form a helical; Signal-anchor for type II membrane protein membrane-spanning segment; the sequence is IQIIALATVALVGSTALIGYA. Over 31-147 the chain is Periplasmic; the sequence is MRDGINYFRS…EQGVYREGDS (117 aa). 2 residues coordinate heme: His123 and Tyr127.

This sequence belongs to the CcmE/CycJ family.

The protein resides in the cell inner membrane. Its function is as follows. Heme chaperone required for the biogenesis of c-type cytochromes. Transiently binds heme delivered by CcmC and transfers the heme to apo-cytochromes in a process facilitated by CcmF and CcmH. This Ruegeria sp. (strain TM1040) (Silicibacter sp.) protein is Cytochrome c-type biogenesis protein CcmE.